We begin with the raw amino-acid sequence, 193 residues long: CASP-like protein 2D1 (193 aa).

Residues 1–24 (MRANNNNTREEERSSSSKQQQPQA) are disordered. The Cytoplasmic segment spans residues 1–29 (MRANNNNTREEERSSSSKQQQPQAHMSLK). Residues 30–50 (IIDSCLRLSVVPLSVATIWLT) traverse the membrane as a helical segment. Residues 51–73 (VTNHESNPDYGNLDYNSIMGLKY) are Extracellular-facing. A helical membrane pass occupies residues 74–94 (MVGVSAISAIYALLSTISLWV). At 95–109 (TCLVSKAWLFFVPDQ) the chain is on the cytoplasmic side. The helical transmembrane segment at 110 to 132 (VLAYVMTTSVAGATEIVYLLNKG) threads the bilayer. Over 133–151 (DKIVTWSEMCSSYPHYCSK) the chain is Extracellular. Residues 152-172 (LTIALGLHVFVLFFFLFLSVI) traverse the membrane as a helical segment. The Cytoplasmic segment spans residues 173-193 (SAYRAFSPFDPPCDSQTNIDA).

The protein belongs to the Casparian strip membrane proteins (CASP) family. Homodimer and heterodimers.

The protein resides in the cell membrane. The chain is CASP-like protein 2D1 from Arabidopsis lyrata subsp. lyrata (Lyre-leaved rock-cress).